Reading from the N-terminus, the 779-residue chain is Pleckstrin homology domain-containing family A member 4 (779 aa).

The PH domain occupies 54–153; it reads PVHIRGWLHK…WLRALGKASR (100 aa). Disordered regions lie at residues 152 to 355, 495 to 669, and 694 to 766; these read SRAE…LPGP, AGLG…SGGH, and SPER…QEEG. Phosphoserine is present on S164. Positions 183 to 193 are enriched in basic and acidic residues; sequence VNRREEGRTSE. Low complexity-rich tracts occupy residues 246 to 259 and 324 to 334; these read PRPR…PPLS and QSTQVSSGSST. Residues 517 to 527 show a composition bias toward basic and acidic residues; sequence QREESSERESL. The span at 528–540 shows a compositional bias: low complexity; that stretch reads SESLELSSPQSPE. S562 is modified (phosphoserine). Positions 567–580 are enriched in polar residues; it reads RASSPECRQQSSPL. Composition is skewed to low complexity over residues 608–627 and 649–659; these read GLSL…RTLS and SSGSWSSPRHS. Residues 720–740 are compositionally biased toward polar residues; it reads VTSSPTSHKANSATTGFSCQG.

The protein localises to the cytoplasm. It localises to the membrane. Its function is as follows. Binds specifically to phosphatidylinositol 3-phosphate (PtdIns3P), but not to other phosphoinositides. The protein is Pleckstrin homology domain-containing family A member 4 (Plekha4) of Rattus norvegicus (Rat).